Reading from the N-terminus, the 729-residue chain is Fatty acid oxidation complex subunit alpha (729 aa).

Residues 1 to 189 (MLYKGDTLYL…KIGLVDGVVK (189 aa)) form an enoyl-CoA hydratase/isomerase region. Position 296 (Asp-296) interacts with substrate. Positions 311-729 (ETPKQAAVLG…ARPVGDLKTA (419 aa)) are 3-hydroxyacyl-CoA dehydrogenase. NAD(+)-binding positions include Met-324, Asp-343, 400–402 (VVE), Lys-407, and Ser-429. The active-site For 3-hydroxyacyl-CoA dehydrogenase activity is His-450. Position 453 (Asn-453) interacts with NAD(+). Residues Asn-500 and Tyr-660 each coordinate substrate. The tract at residues 708-729 (RHNEPYYPPVEPARPVGDLKTA) is disordered.

It in the N-terminal section; belongs to the enoyl-CoA hydratase/isomerase family. The protein in the C-terminal section; belongs to the 3-hydroxyacyl-CoA dehydrogenase family. Heterotetramer of two alpha chains (FadB) and two beta chains (FadA).

It carries out the reaction a (3S)-3-hydroxyacyl-CoA + NAD(+) = a 3-oxoacyl-CoA + NADH + H(+). It catalyses the reaction a (3S)-3-hydroxyacyl-CoA = a (2E)-enoyl-CoA + H2O. The enzyme catalyses a 4-saturated-(3S)-3-hydroxyacyl-CoA = a (3E)-enoyl-CoA + H2O. The catalysed reaction is (3S)-3-hydroxybutanoyl-CoA = (3R)-3-hydroxybutanoyl-CoA. It carries out the reaction a (3Z)-enoyl-CoA = a 4-saturated (2E)-enoyl-CoA. It catalyses the reaction a (3E)-enoyl-CoA = a 4-saturated (2E)-enoyl-CoA. It functions in the pathway lipid metabolism; fatty acid beta-oxidation. Functionally, involved in the aerobic and anaerobic degradation of long-chain fatty acids via beta-oxidation cycle. Catalyzes the formation of 3-oxoacyl-CoA from enoyl-CoA via L-3-hydroxyacyl-CoA. It can also use D-3-hydroxyacyl-CoA and cis-3-enoyl-CoA as substrate. This Escherichia coli O8 (strain IAI1) protein is Fatty acid oxidation complex subunit alpha.